We begin with the raw amino-acid sequence, 300 residues long: tRNA pseudouridine synthase B (300 aa).

The Nucleophile role is filled by D38.

This sequence belongs to the pseudouridine synthase TruB family. Type 1 subfamily.

The enzyme catalyses uridine(55) in tRNA = pseudouridine(55) in tRNA. In terms of biological role, responsible for synthesis of pseudouridine from uracil-55 in the psi GC loop of transfer RNAs. The sequence is that of tRNA pseudouridine synthase B from Dehalococcoides mccartyi (strain ATCC BAA-2266 / KCTC 15142 / 195) (Dehalococcoides ethenogenes (strain 195)).